Reading from the N-terminus, the 378-residue chain is UDP-N-acetylglucosamine--N-acetylmuramyl-(pentapeptide) pyrophosphoryl-undecaprenol N-acetylglucosamine transferase (378 aa).

UDP-N-acetyl-alpha-D-glucosamine is bound by residues 14-16, asparagine 125, arginine 165, serine 193, and glutamine 293; that span reads TGG.

The protein belongs to the glycosyltransferase 28 family. MurG subfamily.

It localises to the cell inner membrane. It carries out the reaction di-trans,octa-cis-undecaprenyl diphospho-N-acetyl-alpha-D-muramoyl-L-alanyl-D-glutamyl-meso-2,6-diaminopimeloyl-D-alanyl-D-alanine + UDP-N-acetyl-alpha-D-glucosamine = di-trans,octa-cis-undecaprenyl diphospho-[N-acetyl-alpha-D-glucosaminyl-(1-&gt;4)]-N-acetyl-alpha-D-muramoyl-L-alanyl-D-glutamyl-meso-2,6-diaminopimeloyl-D-alanyl-D-alanine + UDP + H(+). The protein operates within cell wall biogenesis; peptidoglycan biosynthesis. Functionally, cell wall formation. Catalyzes the transfer of a GlcNAc subunit on undecaprenyl-pyrophosphoryl-MurNAc-pentapeptide (lipid intermediate I) to form undecaprenyl-pyrophosphoryl-MurNAc-(pentapeptide)GlcNAc (lipid intermediate II). This is UDP-N-acetylglucosamine--N-acetylmuramyl-(pentapeptide) pyrophosphoryl-undecaprenol N-acetylglucosamine transferase from Bartonella tribocorum (strain CIP 105476 / IBS 506).